Reading from the N-terminus, the 426-residue chain is Serine--tRNA ligase (426 aa).

An L-serine-binding site is contributed by 231–233; sequence TSE. 262–264 serves as a coordination point for ATP; sequence RSE. E285 serves as a coordination point for L-serine. An ATP-binding site is contributed by 349 to 352; sequence EISS. Position 385 (S385) interacts with L-serine.

Belongs to the class-II aminoacyl-tRNA synthetase family. Type-1 seryl-tRNA synthetase subfamily. Homodimer. The tRNA molecule binds across the dimer.

The protein resides in the cytoplasm. The enzyme catalyses tRNA(Ser) + L-serine + ATP = L-seryl-tRNA(Ser) + AMP + diphosphate + H(+). The catalysed reaction is tRNA(Sec) + L-serine + ATP = L-seryl-tRNA(Sec) + AMP + diphosphate + H(+). It participates in aminoacyl-tRNA biosynthesis; selenocysteinyl-tRNA(Sec) biosynthesis; L-seryl-tRNA(Sec) from L-serine and tRNA(Sec): step 1/1. Functionally, catalyzes the attachment of serine to tRNA(Ser). Is also able to aminoacylate tRNA(Sec) with serine, to form the misacylated tRNA L-seryl-tRNA(Sec), which will be further converted into selenocysteinyl-tRNA(Sec). This is Serine--tRNA ligase from Legionella pneumophila (strain Lens).